Consider the following 309-residue polypeptide: Homoserine O-succinyltransferase (309 aa).

The Acyl-thioester intermediate role is filled by Cys-142. 2 residues coordinate substrate: Lys-163 and Ser-192. The Proton acceptor role is filled by His-235. The active site involves Glu-237. Arg-249 lines the substrate pocket.

This sequence belongs to the MetA family.

Its subcellular location is the cytoplasm. The enzyme catalyses L-homoserine + succinyl-CoA = O-succinyl-L-homoserine + CoA. The protein operates within amino-acid biosynthesis; L-methionine biosynthesis via de novo pathway; O-succinyl-L-homoserine from L-homoserine: step 1/1. Its function is as follows. Transfers a succinyl group from succinyl-CoA to L-homoserine, forming succinyl-L-homoserine. In Erwinia tasmaniensis (strain DSM 17950 / CFBP 7177 / CIP 109463 / NCPPB 4357 / Et1/99), this protein is Homoserine O-succinyltransferase.